A 1374-amino-acid chain; its full sequence is Y' element ATP-dependent helicase YLL066C (1374 aa).

The tract at residues 321–345 is disordered; that stretch reads AGEAASSDHDQKISRVTRKRPREPK. The 178-residue stretch at 375–552 folds into the Helicase ATP-binding domain; sequence EIYMADTPSV…LQRIGLTGLA (178 aa). ATP is bound at residue 388-395; it reads APPGYGKT. The DEAH box signature appears at 498-501; the sequence is DEFH. Residues 609-758 enclose the Helicase C-terminal domain; it reads KLLLALFEIE…EFYGLESKKG (150 aa). The span at 832–975 shows a compositional bias: low complexity; sequence ANASTNATTN…ATTTESTNAS (144 aa). Positions 832 to 999 are disordered; that stretch reads ANASTNATTN…RFHPVTDINK (168 aa). Basic and acidic residues predominate over residues 976 to 999; sequence AKEDANKDGNAEDNRFHPVTDINK.

It belongs to the helicase family. Yeast subtelomeric Y' repeat subfamily.

Functionally, catalyzes DNA unwinding and is involved in telomerase-independent telomere maintenance. In Saccharomyces cerevisiae (strain ATCC 204508 / S288c) (Baker's yeast), this protein is Y' element ATP-dependent helicase YLL066C.